A 105-amino-acid chain; its full sequence is Probable tetrachloroethene reductive dehalogenase membrane anchor protein (105 aa).

A run of 3 helical transmembrane segments spans residues 3–23 (IYDV…QYGI), 35–55 (IPLQ…LAWG), and 66–86 (AIGM…IITY).

This sequence belongs to the PceB family.

Its subcellular location is the cell membrane. Its function is as follows. May act as a membrane anchor for the tetrachloroethene reductive dehalogenase PceA. This Desulfitobacterium hafniense (Desulfitobacterium frappieri) protein is Probable tetrachloroethene reductive dehalogenase membrane anchor protein.